A 351-amino-acid chain; its full sequence is MSDERRLEVLRAIVRDYVSTREPVGSRALVERHALGVSPATIRNDMAALEESGYIAQPHTSAGRVPTDKGYRLFVDRLSTLKPLTPAERRAIEHLLDEAVDLDDVVDRTVRLLAQITHQVAVVQYPSLRRTTLRHIELVPMAPGRLLVVMIMDTGRVEQRTIELAADAAPDEAVVAELRARLNAVGAGRRMPRLGVELEMLPTYFAPADRPFVDAVNAVIAEALAEETEERIVMAGTANLARSDTDFPRTISPVLEALEEQVVLLRLLSEMALDAEEVRSERGDGISVRIGHENRHAGLAETSIVASGYGGVAADDAVAYLGVLGPTRMDYPTTMASVRAVARYLSRALGG.

It belongs to the HrcA family.

Its function is as follows. Negative regulator of class I heat shock genes (grpE-dnaK-dnaJ and groELS operons). Prevents heat-shock induction of these operons. The protein is Heat-inducible transcription repressor HrcA of Beutenbergia cavernae (strain ATCC BAA-8 / DSM 12333 / CCUG 43141 / JCM 11478 / NBRC 16432 / NCIMB 13614 / HKI 0122).